We begin with the raw amino-acid sequence, 197 residues long: Nucleoside triphosphate pyrophosphatase (197 aa).

The active-site Proton acceptor is D72.

This sequence belongs to the Maf family. It depends on a divalent metal cation as a cofactor.

It localises to the cytoplasm. The enzyme catalyses a ribonucleoside 5'-triphosphate + H2O = a ribonucleoside 5'-phosphate + diphosphate + H(+). It carries out the reaction a 2'-deoxyribonucleoside 5'-triphosphate + H2O = a 2'-deoxyribonucleoside 5'-phosphate + diphosphate + H(+). Nucleoside triphosphate pyrophosphatase. May have a dual role in cell division arrest and in preventing the incorporation of modified nucleotides into cellular nucleic acids. In Corynebacterium glutamicum (strain R), this protein is Nucleoside triphosphate pyrophosphatase.